The sequence spans 590 residues: Leukocyte immunoglobulin-like receptor subfamily B member 5 (590 aa).

A signal peptide spans M1–A23. Topologically, residues G24–G458 are extracellular. 4 consecutive Ig-like C2-type domains span residues P27–V116, D111–I228, P224–D313, and G337–S418. C49 and C98 are joined by a disulfide. N139 carries an N-linked (GlcNAc...) asparagine glycan. Intrachain disulfides connect C144-C195 and C244-C295. N-linked (GlcNAc...) asparagine glycans are attached at residues N279 and N339. C344 and C395 are disulfide-bonded. Positions V416–P433 are enriched in low complexity. Residues V416–P449 form a disordered region. A helical transmembrane segment spans residues V459–L479. Residues R480–H590 are Cytoplasmic-facing. 2 disordered regions span residues R488 to S514 and K529 to Q550. S514 carries the post-translational modification Phosphoserine. An ITIM motif 1 motif is present at residues V552–L557. Positions L562–P578 are enriched in basic and acidic residues. A disordered region spans residues L562–H590. The ITIM motif 2 motif lies at S582–L587.

As to expression, detected in a natural killer (NK) cells.

It localises to the membrane. Functionally, may act as receptor for class I MHC antigens. This chain is Leukocyte immunoglobulin-like receptor subfamily B member 5 (LILRB5), found in Homo sapiens (Human).